The sequence spans 87 residues: U14-lycotoxin-Ls1a (87 aa).

The N-terminal stretch at 1 to 20 (MNSKVFAVLLLLALLTCVLS) is a signal peptide. One can recognise a WAP domain in the interval 21–66 (EKYCPTPRNTSCKKMNIRNNCCRDSDCTSNAFCCAEPCGNFCHKAS). 5 disulfide bridges follow: cysteine 24-cysteine 54, cysteine 32-cysteine 58, cysteine 41-cysteine 53, cysteine 42-cysteine 80, and cysteine 47-cysteine 62.

Belongs to the venom protein 11 family. 01 (wap-1) subfamily. In terms of processing, contains 5 disulfide bonds. Expressed by the venom gland.

Its subcellular location is the secreted. In terms of biological role, has antibacterial activity. The chain is U14-lycotoxin-Ls1a from Lycosa singoriensis (Wolf spider).